The sequence spans 144 residues: MPYYEHVFLARQDASAQQVEELTTQITGVIEGLGGKVTKTESWGVRSLTYRIQKNRKAHFVLLNIDGPATIVAEVERQERINEDIIRYLTVRVDELEEGPSAMMRKADRDRERDERGGPREGGFRSERGPRRPREEETTASVEE.

The interval glutamate 97–glutamate 144 is disordered. Over residues arginine 105–glutamate 137 the composition is skewed to basic and acidic residues.

The protein belongs to the bacterial ribosomal protein bS6 family.

Its function is as follows. Binds together with bS18 to 16S ribosomal RNA. The chain is Small ribosomal subunit protein bS6 from Afipia carboxidovorans (strain ATCC 49405 / DSM 1227 / KCTC 32145 / OM5) (Oligotropha carboxidovorans).